A 221-amino-acid chain; its full sequence is Guanylate kinase (221 aa).

The region spanning 20-199 (GLMFILSSPS…CFGKVREILA (180 aa)) is the Guanylate kinase-like domain. 27 to 34 (SPSGAGKT) serves as a coordination point for ATP.

Belongs to the guanylate kinase family.

It localises to the cytoplasm. The enzyme catalyses GMP + ATP = GDP + ADP. Essential for recycling GMP and indirectly, cGMP. The polypeptide is Guanylate kinase (Novosphingobium aromaticivorans (strain ATCC 700278 / DSM 12444 / CCUG 56034 / CIP 105152 / NBRC 16084 / F199)).